The sequence spans 134 residues: Small ribosomal subunit protein uS11 (134 aa).

It belongs to the universal ribosomal protein uS11 family. As to quaternary structure, part of the 30S ribosomal subunit. Interacts with proteins S7 and S18. Binds to IF-3.

Located on the platform of the 30S subunit, it bridges several disparate RNA helices of the 16S rRNA. Forms part of the Shine-Dalgarno cleft in the 70S ribosome. The sequence is that of Small ribosomal subunit protein uS11 from Frankia alni (strain DSM 45986 / CECT 9034 / ACN14a).